We begin with the raw amino-acid sequence, 236 residues long: MTKQMLLENVSFRYGKTGPLIVDHVSCEVYSGDFIGIIGPNGGGKTTLTQLMLGLLQPVCGSISTYSVQDHRPLSIGWVPQHFSYDAAFPITVKETVLSGRLATLPWYGRYTQEDHEAAEEALLTVDLIDYKDSCFSHLSGGQIQRVLLARALAARPEFLLLDEPTANIDPVNQQKILQILSALNKHCTILMITHDLHHTAGCFNRVFFMNKTLTTLADTTTISERFCCNTFGRCP.

The 232-residue stretch at 5 to 236 (MLLENVSFRY…FCCNTFGRCP (232 aa)) folds into the ABC transporter domain. 39-46 (GPNGGGKT) is a binding site for ATP.

This sequence belongs to the ABC transporter superfamily.

The protein resides in the cell inner membrane. Functionally, part of an ATP-driven transport system CT_415/CT_416/CT_417 for a metal. Probably responsible for energy coupling to the transport system. The chain is Probable metal transport system ATP-binding protein CT_416 from Chlamydia trachomatis serovar D (strain ATCC VR-885 / DSM 19411 / UW-3/Cx).